The sequence spans 113 residues: Holo-[acyl-carrier-protein] synthase (113 aa).

2 residues coordinate Mg(2+): Asp-5 and Glu-50.

The protein belongs to the P-Pant transferase superfamily. AcpS family. Mg(2+) is required as a cofactor.

Its subcellular location is the cytoplasm. It catalyses the reaction apo-[ACP] + CoA = holo-[ACP] + adenosine 3',5'-bisphosphate + H(+). In terms of biological role, transfers the 4'-phosphopantetheine moiety from coenzyme A to a Ser of acyl-carrier-protein. This Nautilia profundicola (strain ATCC BAA-1463 / DSM 18972 / AmH) protein is Holo-[acyl-carrier-protein] synthase.